The chain runs to 1401 residues: DNA-directed RNA polymerase subunit beta (1401 aa).

Belongs to the RNA polymerase beta chain family. The RNAP catalytic core consists of 2 alpha, 1 beta, 1 beta' and 1 omega subunit. When a sigma factor is associated with the core the holoenzyme is formed, which can initiate transcription.

The catalysed reaction is RNA(n) + a ribonucleoside 5'-triphosphate = RNA(n+1) + diphosphate. Its function is as follows. DNA-dependent RNA polymerase catalyzes the transcription of DNA into RNA using the four ribonucleoside triphosphates as substrates. This is DNA-directed RNA polymerase subunit beta from Desulforapulum autotrophicum (strain ATCC 43914 / DSM 3382 / VKM B-1955 / HRM2) (Desulfobacterium autotrophicum).